The following is a 434-amino-acid chain: Na(+)/H(+) antiporter NhaA 1 (434 aa).

11 helical membrane-spanning segments follow: residues 34–54 (GLLL…PWSA), 73–93 (LTLG…VAGL), 111–131 (ALPV…YVLW), 141–161 (GWAI…AVIS), 171–191 (FLLT…ALFY), 194–214 (ELHL…ALLV), 233–253 (VLVH…GFAV), 278–298 (SAGL…VGGF), 313–333 (VVTG…WLLA), 346–366 (WVDV…SLLI), and 380–400 (HVKV…TGVL).

This sequence belongs to the NhaA Na(+)/H(+) (TC 2.A.33) antiporter family.

It localises to the cell membrane. The enzyme catalyses Na(+)(in) + 2 H(+)(out) = Na(+)(out) + 2 H(+)(in). Its function is as follows. Na(+)/H(+) antiporter that extrudes sodium in exchange for external protons. This chain is Na(+)/H(+) antiporter NhaA 1, found in Nocardioides sp. (strain ATCC BAA-499 / JS614).